The primary structure comprises 278 residues: MANYTAADVKKLRELTGAGMMDCKKALDEAEGNVEKAVEALRIKGQKGVAKREGRSAENGAVVSIIADDNTSGVLVELKCETDFVAKGEKFQNVATAIAEHVAKAAPADLEALLASEIEPGKTVQAYVDEANANLGEKIVLDRFAQFSGGFVTAYMHRTMPDLPPQIGVLVELDKPNAEIAKGVAQHIAAFAPKYLSKEDVPAEVVESERRVAEETTRAEGKPEAALPKIVEGRLNGFFKDATLLGQPYALDNKKSVQKVLEEAGVSLKRFSRIKVGI.

Residues 82–85 (TDFV) are involved in Mg(2+) ion dislocation from EF-Tu.

Belongs to the EF-Ts family.

It is found in the cytoplasm. In terms of biological role, associates with the EF-Tu.GDP complex and induces the exchange of GDP to GTP. It remains bound to the aminoacyl-tRNA.EF-Tu.GTP complex up to the GTP hydrolysis stage on the ribosome. In Streptomyces coelicolor (strain ATCC BAA-471 / A3(2) / M145), this protein is Elongation factor Ts (tsf).